We begin with the raw amino-acid sequence, 308 residues long: Protein translocase subunit SecF (308 aa).

Transmembrane regions (helical) follow at residues 18–38 (AYVF…TRGL), 134–154 (GAIY…LIRF), 160–180 (LGAV…FSLL), 193–213 (TIIA…VVVF), 244–264 (IITS…GGEV), and 272–292 (LIVG…PVVI).

The protein belongs to the SecD/SecF family. SecF subfamily. As to quaternary structure, forms a complex with SecD. Part of the essential Sec protein translocation apparatus which comprises SecA, SecYEG and auxiliary proteins SecDF. Other proteins may also be involved.

The protein localises to the cell inner membrane. Functionally, part of the Sec protein translocase complex. Interacts with the SecYEG preprotein conducting channel. SecDF uses the proton motive force (PMF) to complete protein translocation after the ATP-dependent function of SecA. This chain is Protein translocase subunit SecF, found in Rhodothermus marinus (strain ATCC 43812 / DSM 4252 / R-10) (Rhodothermus obamensis).